The chain runs to 73 residues: Salivary thrombin inhibitor XC-42 (73 aa).

A signal peptide spans 1–23 (MKLQFLFIFIAFCVMLFAQIATA).

In terms of assembly, interacts with human F2 (thrombin). As to expression, salivary gland (at protein level).

The protein localises to the secreted. Its function is as follows. Acts as a competitive inhibitor of host thrombin. The protein is Salivary thrombin inhibitor XC-42 of Xenopsylla cheopis (Oriental rat flea).